The following is a 255-amino-acid chain: ATP-dependent L-serine kinase (255 aa).

The active site involves E36. An O-phospho-L-serine-binding site is contributed by V74. Mg(2+) is bound at residue D75. Residues G76, H77, H78, W108, K234, T236, and H238 each coordinate O-phospho-L-serine.

Belongs to the SerK family. Mg(2+) is required as a cofactor.

The enzyme catalyses L-serine + ATP = O-phospho-L-serine + ADP + H(+). Its function is as follows. Free serine kinase that uses ATP to phosphorylate L-serine to yield O-phospho-L-serine and ADP. The polypeptide is ATP-dependent L-serine kinase (Desulfurococcus mucosus (strain ATCC 35584 / DSM 2162 / JCM 9187 / O7/1)).